The primary structure comprises 321 residues: MTDGPRAAAPRFFPQHARHLLGLQGMHPTRIEPFLDLAESYALMSRSRKTPRDRLLGRTVINLFFEDSTRTRTSFELAAKRLGADVINMTVASSSVNKGETLLDTAATLNAMRTDLLVVRHSQSGAPALLARKVEASVVNAGDGTHEHPTQALLDALTIRRHFGTLHGLTVAICGDVSHSRVARSNIHLLTAMGARVRVVGPPTLIPGAIGALGVDVHYTMEDGLRDVDVVMMLRMQRERMSGGQVPSAREYFRFYGLDRKRLAVARPGALVMHPGPMNRGVEIDSRVADSDQSVIREQVEMGVAVRMAVLDLLSRAGDQS.

2 residues coordinate carbamoyl phosphate: Arg-70 and Thr-71. Lys-98 lines the L-aspartate pocket. Carbamoyl phosphate-binding residues include Arg-120, His-148, and Gln-151. L-aspartate is bound by residues Arg-181 and Arg-235. Gly-276 and Pro-277 together coordinate carbamoyl phosphate.

The protein belongs to the aspartate/ornithine carbamoyltransferase superfamily. ATCase family. As to quaternary structure, heterododecamer (2C3:3R2) of six catalytic PyrB chains organized as two trimers (C3), and six regulatory PyrI chains organized as three dimers (R2).

The catalysed reaction is carbamoyl phosphate + L-aspartate = N-carbamoyl-L-aspartate + phosphate + H(+). The protein operates within pyrimidine metabolism; UMP biosynthesis via de novo pathway; (S)-dihydroorotate from bicarbonate: step 2/3. Its function is as follows. Catalyzes the condensation of carbamoyl phosphate and aspartate to form carbamoyl aspartate and inorganic phosphate, the committed step in the de novo pyrimidine nucleotide biosynthesis pathway. This Gluconacetobacter diazotrophicus (strain ATCC 49037 / DSM 5601 / CCUG 37298 / CIP 103539 / LMG 7603 / PAl5) protein is Aspartate carbamoyltransferase catalytic subunit.